Reading from the N-terminus, the 244-residue chain is Derlin-2.2 (244 aa).

At Met1–Thr21 the chain is on the cytoplasmic side. Residues Ala22–Leu42 form a helical membrane-spanning segment. Over Asn43 to Phe96 the chain is Lumenal. Residues Leu97–Ile117 form a helical membrane-spanning segment. Topologically, residues Pro118 to Ser121 are cytoplasmic. Residues Ala122 to Trp142 form a helical membrane-spanning segment. Residues Ser143 to Ser152 lie on the Lumenal side of the membrane. Residues Phe153–Ile173 form a helical membrane-spanning segment. Residues Leu174–Asp244 are Cytoplasmic-facing.

It belongs to the derlin family.

The protein localises to the endoplasmic reticulum membrane. Its function is as follows. May be involved in the degradation process of specific misfolded endoplasmic reticulum (ER) luminal proteins. This is Derlin-2.2 (DER2.2) from Arabidopsis thaliana (Mouse-ear cress).